The chain runs to 1183 residues: PAN2-PAN3 deadenylation complex catalytic subunit PAN2 (1183 aa).

The segment at 1–24 is disordered; sequence MDGWTEISRIAATTQPPKGPSPHI. WD repeat units follow at residues 159 to 207, 269 to 309, and 327 to 366; these read DLNK…SIKS, PFPA…NVFL, and SKAPFMTNLEISENGDFFAFSDSYATMHLWTLNNSGSTIT. Residues 369–520 form a linker region; sequence FVNFPASIEQ…FQYKVPLSRK (152 aa). Residues 521–919 enclose the USP domain; it reads KIPNCYSRLQ…KPVILVYHDS (399 aa). Residues 977 to 1151 enclose the Exonuclease domain; the sequence is IAIDAEFVNL…EDAYTALLLY (175 aa). A divalent metal cation-binding residues include Asp980, Glu982, Asp1090, and Asp1143.

The protein belongs to the peptidase C19 family. PAN2 subfamily. As to quaternary structure, forms a heterotrimer with an asymmetric homodimer of the regulatory subunit PAN3 to form the poly(A)-nuclease (PAN) deadenylation complex. The cofactor is a divalent metal cation.

It localises to the cytoplasm. It carries out the reaction Exonucleolytic cleavage of poly(A) to 5'-AMP.. With respect to regulation, positively regulated by the regulatory subunit PAN3. In terms of biological role, catalytic subunit of the poly(A)-nuclease (PAN) deadenylation complex, one of two cytoplasmic mRNA deadenylases involved in mRNA turnover. PAN specifically shortens poly(A) tails of RNA and the activity is stimulated by poly(A)-binding protein PAB1. PAN deadenylation is followed by rapid degradation of the shortened mRNA tails by the CCR4-NOT complex. Deadenylated mRNAs are then degraded by two alternative mechanisms, namely exosome-mediated 3'-5' exonucleolytic degradation, or deadenylation-dependent mRNA decaping and subsequent 5'-3' exonucleolytic degradation by XRN1. May also be involved in post-transcriptional maturation of mRNA poly(A) tails. In Scheffersomyces stipitis (strain ATCC 58785 / CBS 6054 / NBRC 10063 / NRRL Y-11545) (Yeast), this protein is PAN2-PAN3 deadenylation complex catalytic subunit PAN2.